We begin with the raw amino-acid sequence, 526 residues long: Zinc finger protein Helios (526 aa).

The segment at 28–94 (DLTSSTPNGQ…IESSEVADNR (67 aa)) is disordered. Polar residues predominate over residues 29–50 (LTSSTPNGQHASPSHMTSTNSV). Ser56 is modified (phosphoserine). The span at 61 to 77 (DRQPLSREDEIRGHDEG) shows a compositional bias: basic and acidic residues. Phosphoserine occurs at positions 78 and 79. Lys95 is covalently cross-linked (Glycyl lysine isopeptide (Lys-Gly) (interchain with G-Cter in SUMO2)). 4 C2H2-type zinc fingers span residues 112–134 (LKCD…KRSH), 140–162 (FHCN…IKLH), 168–190 (FKCP…LRTH), and 196–219 (HKCN…ERCH). Lys288 is subject to N6-acetyllysine. Residues 368 to 379 (ISRETSDSHENN) show a composition bias toward basic and acidic residues. Residues 368–435 (ISRETSDSHE…LNPKRKQSPA (68 aa)) form a disordered region. Glycyl lysine isopeptide (Lys-Gly) (interchain with G-Cter in SUMO2) cross-links involve residues Lys442 and Lys448. 2 consecutive C2H2-type zinc fingers follow at residues 471–493 (FKCE…MGCH) and 499–523 (LECN…RGEH).

The protein belongs to the Ikaros C2H2-type zinc-finger protein family. Can form homodimers. Interacts with IKZF4 and IKZF5. In terms of tissue distribution, expressed in outer hair cells (OHC) of the organ of Corti. Abundant in thymus, low expression in bone marrow and brain and no detectable expression in spleen, liver, kidney or muscle. Expressed in T-cells.

The protein resides in the nucleus. In terms of biological role, transcriptional regulator required for outer hair cells (OHC) maturation and, consequently, for hearing. The protein is Zinc finger protein Helios (Ikzf2) of Mus musculus (Mouse).